A 259-amino-acid chain; its full sequence is Isoepoxydon dehydrogenase patN (259 aa).

Residues asparagine 96 and arginine 125 each coordinate NADP(+). Residues serine 143 and serine 144 each act as proton donor in the active site. Residues tyrosine 158, lysine 162, and isoleucine 191 each coordinate NADP(+). Tyrosine 158 functions as the Proton acceptor in the catalytic mechanism. Lysine 162 acts as the Lowers pKa of active site Tyr in catalysis.

Belongs to the short-chain dehydrogenases/reductases (SDR) family.

It localises to the cytoplasm. The protein resides in the cytosol. The catalysed reaction is isoepoxydon + NADP(+) = phyllostine + NADPH + H(+). It participates in mycotoxin biosynthesis; patulin biosynthesis. Functionally, isoepoxydon dehydrogenase; part of the gene cluster that mediates the biosynthesis of patulin, an acetate-derived tetraketide mycotoxin produced by several fungal species that shows antimicrobial properties against several bacteria. PatN catalyzes the conversion of isoepoxydon into phyllostine. The pathway begins with the synthesis of 6-methylsalicylic acid by the polyketide synthase (PKS) patK via condensation of acetate and malonate units. The 6-methylsalicylic acid decarboxylase patG then catalyzes the decarboxylation of 6-methylsalicylic acid to yield m-cresol (also known as 3-methylphenol). These first reactions occur in the cytosol. The intermediate m-cresol is then transported into the endoplasmic reticulum where the cytochrome P450 monooxygenase patH converts it to m-hydroxybenzyl alcohol, which is further converted to gentisyl alcohol by the cytochrome P450 monooxygenase patI. The oxidoreductases patJ and patO further convert gentisyl alcohol to isoepoxydon in the vacuole. PatN catalyzes then the transformation of isoepoxydon into phyllostine. The cluster protein patF is responsible for the conversion from phyllostine to neopatulin whereas the alcohol dehydrogenase patD converts neopatulin to E-ascladiol. The steps between isoepoxydon and E-ascladiol occur in the cytosol, and E-ascladiol is probably secreted to the extracellular space by one of the cluster-specific transporters patC or patM. Finally, the secreted patulin synthase patE catalyzes the conversion of E-ascladiol to patulin. The sequence is that of Isoepoxydon dehydrogenase patN from Aspergillus clavatus (strain ATCC 1007 / CBS 513.65 / DSM 816 / NCTC 3887 / NRRL 1 / QM 1276 / 107).